The primary structure comprises 184 residues: Large ribosomal subunit protein bL17 (184 aa).

The interval 126–184 is disordered; it reads TRAARAAASKQTADEAQVEETPAEEVTEETAAEETTEAAQADEAPAEEAPVEEKKDEEK. Positions 141–161 are enriched in acidic residues; the sequence is AQVEETPAEEVTEETAAEETT.

The protein belongs to the bacterial ribosomal protein bL17 family. In terms of assembly, part of the 50S ribosomal subunit. Contacts protein L32.

This Corynebacterium efficiens (strain DSM 44549 / YS-314 / AJ 12310 / JCM 11189 / NBRC 100395) protein is Large ribosomal subunit protein bL17.